The sequence spans 88 residues: Small ribosomal subunit protein uS15 (88 aa).

The protein belongs to the universal ribosomal protein uS15 family. As to quaternary structure, part of the 30S ribosomal subunit. Forms a bridge to the 50S subunit in the 70S ribosome, contacting the 23S rRNA.

Functionally, one of the primary rRNA binding proteins, it binds directly to 16S rRNA where it helps nucleate assembly of the platform of the 30S subunit by binding and bridging several RNA helices of the 16S rRNA. Its function is as follows. Forms an intersubunit bridge (bridge B4) with the 23S rRNA of the 50S subunit in the ribosome. This chain is Small ribosomal subunit protein uS15, found in Borrelia hermsii (strain HS1 / DAH).